Consider the following 421-residue polypeptide: Tryptophan synthase beta chain (421 aa).

Lysine 110 carries the post-translational modification N6-(pyridoxal phosphate)lysine.

Belongs to the TrpB family. As to quaternary structure, tetramer of two alpha and two beta chains. It depends on pyridoxal 5'-phosphate as a cofactor.

The catalysed reaction is (1S,2R)-1-C-(indol-3-yl)glycerol 3-phosphate + L-serine = D-glyceraldehyde 3-phosphate + L-tryptophan + H2O. The protein operates within amino-acid biosynthesis; L-tryptophan biosynthesis; L-tryptophan from chorismate: step 5/5. Its function is as follows. The beta subunit is responsible for the synthesis of L-tryptophan from indole and L-serine. In Mycobacterium intracellulare, this protein is Tryptophan synthase beta chain (trpB).